A 91-amino-acid chain; its full sequence is Probable Fe(2+)-trafficking protein (91 aa).

The protein belongs to the Fe(2+)-trafficking protein family.

Could be a mediator in iron transactions between iron acquisition and iron-requiring processes, such as synthesis and/or repair of Fe-S clusters in biosynthetic enzymes. The sequence is that of Probable Fe(2+)-trafficking protein from Polynucleobacter necessarius subsp. necessarius (strain STIR1).